A 357-amino-acid chain; its full sequence is 3-isopropylmalate dehydrogenase (357 aa).

NAD(+) is bound at residue 76-89; the sequence is GPKWDNEPSHNRPE. 4 residues coordinate substrate: arginine 96, arginine 106, arginine 135, and aspartate 223. 3 residues coordinate Mg(2+): aspartate 223, aspartate 247, and aspartate 251. Residue 281 to 293 participates in NAD(+) binding; that stretch reads GSAPDIAGQDKAN.

It belongs to the isocitrate and isopropylmalate dehydrogenases family. LeuB type 1 subfamily. In terms of assembly, homodimer. It depends on Mg(2+) as a cofactor. Requires Mn(2+) as cofactor.

It localises to the cytoplasm. The enzyme catalyses (2R,3S)-3-isopropylmalate + NAD(+) = 4-methyl-2-oxopentanoate + CO2 + NADH. The protein operates within amino-acid biosynthesis; L-leucine biosynthesis; L-leucine from 3-methyl-2-oxobutanoate: step 3/4. In terms of biological role, catalyzes the oxidation of 3-carboxy-2-hydroxy-4-methylpentanoate (3-isopropylmalate) to 3-carboxy-4-methyl-2-oxopentanoate. The product decarboxylates to 4-methyl-2 oxopentanoate. This is 3-isopropylmalate dehydrogenase from Helicobacter hepaticus (strain ATCC 51449 / 3B1).